The sequence spans 367 residues: 3-isopropylmalate dehydrogenase (367 aa).

77–90 provides a ligand contact to NAD(+); the sequence is GPKYDDLDFSVKPE. Substrate is bound by residues R97, R107, R135, and D224. Mg(2+) contacts are provided by D224, D248, and D252. 287-299 contacts NAD(+); that stretch reads GSAPDIAGQGKAN.

This sequence belongs to the isocitrate and isopropylmalate dehydrogenases family. LeuB type 1 subfamily. As to quaternary structure, homodimer. Mg(2+) is required as a cofactor. It depends on Mn(2+) as a cofactor.

The protein localises to the cytoplasm. The catalysed reaction is (2R,3S)-3-isopropylmalate + NAD(+) = 4-methyl-2-oxopentanoate + CO2 + NADH. It participates in amino-acid biosynthesis; L-leucine biosynthesis; L-leucine from 3-methyl-2-oxobutanoate: step 3/4. Its function is as follows. Catalyzes the oxidation of 3-carboxy-2-hydroxy-4-methylpentanoate (3-isopropylmalate) to 3-carboxy-4-methyl-2-oxopentanoate. The product decarboxylates to 4-methyl-2 oxopentanoate. The polypeptide is 3-isopropylmalate dehydrogenase (Ruegeria pomeroyi (strain ATCC 700808 / DSM 15171 / DSS-3) (Silicibacter pomeroyi)).